Consider the following 141-residue polypeptide: Large ribosomal subunit protein uL11 (141 aa).

This sequence belongs to the universal ribosomal protein uL11 family. As to quaternary structure, part of the ribosomal stalk of the 50S ribosomal subunit. Interacts with L10 and the large rRNA to form the base of the stalk. L10 forms an elongated spine to which L12 dimers bind in a sequential fashion forming a multimeric L10(L12)X complex. In terms of processing, one or more lysine residues are methylated.

Its function is as follows. Forms part of the ribosomal stalk which helps the ribosome interact with GTP-bound translation factors. This chain is Large ribosomal subunit protein uL11, found in Maridesulfovibrio salexigens (strain ATCC 14822 / DSM 2638 / NCIMB 8403 / VKM B-1763) (Desulfovibrio salexigens).